The primary structure comprises 192 residues: Fibroblast growth factor 4B (192 aa).

The signal sequence occupies residues 1 to 22 (MTVQLALVPILLLGTAAVMVHC).

The protein belongs to the heparin-binding growth factors family.

The protein resides in the secreted. Functionally, plays an important role in the regulation of embryonic development, cell proliferation, and cell differentiation. Good candidate for an inducing factor with possible roles both in mesoderm induction at the blastula stage and in the formation of the anteroposterior axis at the gastrula stage. In Xenopus laevis (African clawed frog), this protein is Fibroblast growth factor 4B (fgf4-b).